The following is a 262-amino-acid chain: Acyl-[acyl-carrier-protein]--UDP-N-acetylglucosamine O-acyltransferase (262 aa).

The protein belongs to the transferase hexapeptide repeat family. LpxA subfamily. Homotrimer.

It is found in the cytoplasm. It catalyses the reaction a (3R)-hydroxyacyl-[ACP] + UDP-N-acetyl-alpha-D-glucosamine = a UDP-3-O-[(3R)-3-hydroxyacyl]-N-acetyl-alpha-D-glucosamine + holo-[ACP]. The protein operates within glycolipid biosynthesis; lipid IV(A) biosynthesis; lipid IV(A) from (3R)-3-hydroxytetradecanoyl-[acyl-carrier-protein] and UDP-N-acetyl-alpha-D-glucosamine: step 1/6. Its function is as follows. Involved in the biosynthesis of lipid A, a phosphorylated glycolipid that anchors the lipopolysaccharide to the outer membrane of the cell. The polypeptide is Acyl-[acyl-carrier-protein]--UDP-N-acetylglucosamine O-acyltransferase (Burkholderia orbicola (strain MC0-3)).